The chain runs to 348 residues: Anthranilate phosphoribosyltransferase (348 aa).

5-phospho-alpha-D-ribose 1-diphosphate contacts are provided by residues Gly81, 84 to 85 (GD), Thr89, 91 to 94 (NIST), 109 to 117 (KHGNRSSSG), and Ser121. Gly81 lines the anthranilate pocket. Position 93 (Ser93) interacts with Mg(2+). Residue Asn112 coordinates anthranilate. Arg167 lines the anthranilate pocket. 2 residues coordinate Mg(2+): Asp226 and Glu227.

It belongs to the anthranilate phosphoribosyltransferase family. As to quaternary structure, homodimer. Requires Mg(2+) as cofactor.

The enzyme catalyses N-(5-phospho-beta-D-ribosyl)anthranilate + diphosphate = 5-phospho-alpha-D-ribose 1-diphosphate + anthranilate. It participates in amino-acid biosynthesis; L-tryptophan biosynthesis; L-tryptophan from chorismate: step 2/5. Its function is as follows. Catalyzes the transfer of the phosphoribosyl group of 5-phosphorylribose-1-pyrophosphate (PRPP) to anthranilate to yield N-(5'-phosphoribosyl)-anthranilate (PRA). The protein is Anthranilate phosphoribosyltransferase of Nitrosopumilus maritimus (strain SCM1).